The following is a 177-amino-acid chain: Dihydrofolate reductase (177 aa).

The catalysed reaction is (6S)-5,6,7,8-tetrahydrofolate + NADP(+) = 7,8-dihydrofolate + NADPH + H(+). In terms of biological role, provides the tetrahydrofolates necessary for the synthesis of nucleotides and amino acids. Bacteriophage T5 induces high levels of dihydrofolate reductase in the host cell, probably for the viral replication. The chain is Dihydrofolate reductase from Escherichia phage T5 (Enterobacteria phage T5).